We begin with the raw amino-acid sequence, 69 residues long: Putative membrane protein insertion efficiency factor (69 aa).

This sequence belongs to the UPF0161 family.

The protein resides in the cell membrane. Its function is as follows. Could be involved in insertion of integral membrane proteins into the membrane. This chain is Putative membrane protein insertion efficiency factor, found in Clostridium beijerinckii (strain ATCC 51743 / NCIMB 8052) (Clostridium acetobutylicum).